The sequence spans 211 residues: Large ribosomal subunit protein uL4 (211 aa).

Polar residues predominate over residues 41–53 (QAHSRQGTASTLT). The disordered stretch occupies residues 41 to 78 (QAHSRQGTASTLTRAEVRGGGRKPYKQKGTGRARQGTI). A compositionally biased stretch (basic residues) spans 60–71 (GGRKPYKQKGTG).

This sequence belongs to the universal ribosomal protein uL4 family. Part of the 50S ribosomal subunit.

Its function is as follows. One of the primary rRNA binding proteins, this protein initially binds near the 5'-end of the 23S rRNA. It is important during the early stages of 50S assembly. It makes multiple contacts with different domains of the 23S rRNA in the assembled 50S subunit and ribosome. Functionally, forms part of the polypeptide exit tunnel. The polypeptide is Large ribosomal subunit protein uL4 (Prochlorococcus marinus (strain MIT 9313)).